A 146-amino-acid chain; its full sequence is Hemoglobin subunit beta (146 aa).

N-acetylvaline is present on V1. A Globin domain is found at 2 to 146; sequence HLTGEEKAAV…VANALAHKYH (145 aa). T12 carries the post-translational modification Phosphothreonine. Position 44 is a phosphoserine (S44). K59 carries the post-translational modification N6-acetyllysine. Residue H63 coordinates heme b. An N6-acetyllysine modification is found at K82. Position 92 (H92) interacts with heme b. At C93 the chain carries S-nitrosocysteine. K144 is subject to N6-acetyllysine.

Belongs to the globin family. Heterotetramer of two alpha chains and two beta chains. In terms of tissue distribution, red blood cells.

Involved in oxygen transport from the lung to the various peripheral tissues. The sequence is that of Hemoglobin subunit beta (HBB) from Lutra lutra (European river otter).